Here is a 144-residue protein sequence, read N- to C-terminus: Ig heavy chain V region MOPC 141 (144 aa).

A signal peptide spans 1–19 (MAVLALLFCLATFPSCILS). Positions 20 to 130 (QVQLKESGPG…YYGRSDKYFT (111 aa)) constitute an Ig-like domain.

The sequence is that of Ig heavy chain V region MOPC 141 from Mus musculus (Mouse).